A 55-amino-acid polypeptide reads, in one-letter code: UPF0291 protein CA_C2726 (55 aa).

This sequence belongs to the UPF0291 family.

The protein resides in the cytoplasm. This chain is UPF0291 protein CA_C2726, found in Clostridium acetobutylicum (strain ATCC 824 / DSM 792 / JCM 1419 / IAM 19013 / LMG 5710 / NBRC 13948 / NRRL B-527 / VKM B-1787 / 2291 / W).